The primary structure comprises 135 residues: Cystatin-1 (135 aa).

A signal peptide spans M1 to S24. A Secondary area of contact motif is present at residues Q86 to G90.

This sequence belongs to the cystatin family. Phytocystatin subfamily.

The protein is Cystatin-1 (RAMDAZC7) of Zea mays (Maize).